Here is a 329-residue protein sequence, read N- to C-terminus: Tetraacyldisaccharide 4'-kinase (329 aa).

58-65 (SVGGTGKT) contacts ATP.

The protein belongs to the LpxK family.

The catalysed reaction is a lipid A disaccharide + ATP = a lipid IVA + ADP + H(+). Its pathway is glycolipid biosynthesis; lipid IV(A) biosynthesis; lipid IV(A) from (3R)-3-hydroxytetradecanoyl-[acyl-carrier-protein] and UDP-N-acetyl-alpha-D-glucosamine: step 6/6. Functionally, transfers the gamma-phosphate of ATP to the 4'-position of a tetraacyldisaccharide 1-phosphate intermediate (termed DS-1-P) to form tetraacyldisaccharide 1,4'-bis-phosphate (lipid IVA). This Idiomarina loihiensis (strain ATCC BAA-735 / DSM 15497 / L2-TR) protein is Tetraacyldisaccharide 4'-kinase.